The chain runs to 359 residues: Peptide chain release factor 1 (359 aa).

Residue glutamine 235 is modified to N5-methylglutamine. Positions 283–294 (SKADEERSESRK) are enriched in basic and acidic residues. Residues 283–309 (SKADEERSESRKSQVGSGDRSERIRTY) are disordered.

The protein belongs to the prokaryotic/mitochondrial release factor family. Methylated by PrmC. Methylation increases the termination efficiency of RF1.

It is found in the cytoplasm. In terms of biological role, peptide chain release factor 1 directs the termination of translation in response to the peptide chain termination codons UAG and UAA. This is Peptide chain release factor 1 from Mesorhizobium japonicum (strain LMG 29417 / CECT 9101 / MAFF 303099) (Mesorhizobium loti (strain MAFF 303099)).